The primary structure comprises 693 residues: Golgin subfamily A member 6A (693 aa).

The stretch at 14 to 611 forms a coiled coil; the sequence is LEESRQNKLA…KLLELQELVL (598 aa). 3 disordered regions span residues 20 to 69, 497 to 547, and 661 to 693; these read NKLA…PGDS, LPGE…GTEQ, and NVEP…MQDT. The segment covering 54-69 has biased composition (polar residues); the sequence is SPETTTSGGCHSPGDS. Positions 537-547 are enriched in basic and acidic residues; sequence LPKEKADGTEQ. Over residues 676-693 the composition is skewed to polar residues; that stretch reads DNPTVQQIVQLSPVMQDT.

The protein belongs to the GOLGA6 family. Highly expressed in seminiferous tubes in testis. Highly expressed in spermatids, barely detectable in late pachytene spermatocytes, and not detectable in spermatogonia. Detected at intermediate levels in pancreas and lymph nodes, and at much lower levels in spleen, peripheral blood leukocytes, skeletal muscle, liver, lung, placenta, brain and heart.

The protein is Golgin subfamily A member 6A (GOLGA6A) of Homo sapiens (Human).